The following is a 154-amino-acid chain: Superoxide dismutase [Cu-Zn] 1 (154 aa).

The Cu cation site is built by His47, His49, and His64. A disulfide bridge links Cys58 with Cys147. Zn(2+) contacts are provided by His64, His72, His81, and Asp84. A Cu cation-binding site is contributed by His121. Arg144 contributes to the substrate binding site.

It belongs to the Cu-Zn superoxide dismutase family. Homodimer. The cofactor is Cu cation. Requires Zn(2+) as cofactor.

The protein resides in the cytoplasm. It catalyses the reaction 2 superoxide + 2 H(+) = H2O2 + O2. Destroys radicals which are normally produced within the cells and which are toxic to biological systems. This chain is Superoxide dismutase [Cu-Zn] 1 (SOD1), found in Debaryomyces hansenii (strain ATCC 36239 / CBS 767 / BCRC 21394 / JCM 1990 / NBRC 0083 / IGC 2968) (Yeast).